Reading from the N-terminus, the 564-residue chain is Quinone-dependent D-lactate dehydrogenase (564 aa).

One can recognise an FAD-binding PCMH-type domain in the interval 36 to 207 (GTGNALAVVR…TNLQEKRYQV (172 aa)). FAD-binding positions include 70–74 (AANTG), 78–79 (GS), Gly137, Ser144, Gly154, and Val256.

The protein belongs to the quinone-dependent D-lactate dehydrogenase family. It depends on FAD as a cofactor.

It is found in the cell inner membrane. The catalysed reaction is (R)-lactate + a quinone = a quinol + pyruvate. Its function is as follows. Catalyzes the oxidation of D-lactate to pyruvate. This chain is Quinone-dependent D-lactate dehydrogenase, found in Haemophilus influenzae (strain ATCC 51907 / DSM 11121 / KW20 / Rd).